A 231-amino-acid polypeptide reads, in one-letter code: tRNA (guanine-N(1)-)-methyltransferase (231 aa).

Residues Gly-112 and 132–137 each bind S-adenosyl-L-methionine; that span reads IGDYIL.

The protein belongs to the RNA methyltransferase TrmD family. As to quaternary structure, homodimer.

The protein resides in the cytoplasm. The catalysed reaction is guanosine(37) in tRNA + S-adenosyl-L-methionine = N(1)-methylguanosine(37) in tRNA + S-adenosyl-L-homocysteine + H(+). In terms of biological role, specifically methylates guanosine-37 in various tRNAs. This is tRNA (guanine-N(1)-)-methyltransferase from Sulfurimonas denitrificans (strain ATCC 33889 / DSM 1251) (Thiomicrospira denitrificans (strain ATCC 33889 / DSM 1251)).